We begin with the raw amino-acid sequence, 449 residues long: Probable glycosyltransferase 5 (449 aa).

The segment covering 1–14 (MMEKHGGKVTSDRR) has biased composition (basic and acidic residues). The segment at 1 to 24 (MMEKHGGKVTSDRRAGRRQHGQRC) is disordered. The Cytoplasmic segment spans residues 1 to 28 (MMEKHGGKVTSDRRAGRRQHGQRCSASD). Residues 29 to 49 (AAPLVVVVILIVAALFLILGP) form a helical; Signal-anchor for type II membrane protein membrane-spanning segment. The Lumenal segment spans residues 50-449 (TGSSSFTVPR…HPTFRAARPT (400 aa)). The tract at residues 74-109 (APPPPPPPAQMQAGANASSEEDSGLPPPRQLTDPPY) is disordered. Residues asparagine 89, asparagine 413, and asparagine 422 are each glycosylated (N-linked (GlcNAc...) asparagine).

It belongs to the glycosyltransferase 34 family.

The protein localises to the golgi apparatus membrane. In terms of biological role, probable glycosyltransferase that may be involved in the biosynthesis of xyloglucan. The chain is Probable glycosyltransferase 5 from Oryza sativa subsp. japonica (Rice).